A 443-amino-acid polypeptide reads, in one-letter code: Thymidine phosphorylase (443 aa).

It belongs to the thymidine/pyrimidine-nucleoside phosphorylase family. As to quaternary structure, homodimer.

It catalyses the reaction thymidine + phosphate = 2-deoxy-alpha-D-ribose 1-phosphate + thymine. It participates in pyrimidine metabolism; dTMP biosynthesis via salvage pathway; dTMP from thymine: step 1/2. Functionally, the enzymes which catalyze the reversible phosphorolysis of pyrimidine nucleosides are involved in the degradation of these compounds and in their utilization as carbon and energy sources, or in the rescue of pyrimidine bases for nucleotide synthesis. The protein is Thymidine phosphorylase of Shewanella piezotolerans (strain WP3 / JCM 13877).